Here is a 193-residue protein sequence, read N- to C-terminus: Acyl-homoserine-lactone synthase (193 aa).

Belongs to the autoinducer synthase family.

The catalysed reaction is a fatty acyl-[ACP] + S-adenosyl-L-methionine = an N-acyl-L-homoserine lactone + S-methyl-5'-thioadenosine + holo-[ACP] + H(+). In terms of biological role, required for the synthesis of OHHL (N-(3-oxohexanoyl)-L-homoserine lactone) also known as VAI or N-(beta-ketocaproyl)homoserine lactone or 3-oxo-N-(tetrahydro-2-oxo-3-furanyl)-hexanamide, an autoinducer molecule which binds to LuxR and thus acts in bioluminescence regulation. In Aliivibrio fischeri (strain ATCC 700601 / ES114) (Vibrio fischeri), this protein is Acyl-homoserine-lactone synthase (luxI).